A 282-amino-acid chain; its full sequence is Phosphoglucan phosphatase LSF2, chloroplastic (282 aa).

A chloroplast-targeting transit peptide spans 1–61; it reads MSVIGSKSCI…GENPGTNGVS (61 aa). Substrate-binding positions include Tyr-83, 153 to 156, Asp-161, and 177 to 180; these read RHMR and SLEW. A Tyrosine-protein phosphatase domain is found at 92 to 249; sequence NYTLIRDELI…TYDLAKNDPW (158 aa). Cys-193 acts as the Phosphocysteine intermediate in catalysis. The Glucan phosphatase signature motif CXAGXGR signature appears at 193–199; sequence CSAGLGR. Residues 194–199, Gly-230, Lys-245, Glu-251, 259–263, and Glu-268 each bind substrate; these read SAGLGR and NAFED.

Widely expressed.

The protein resides in the plastid. Its subcellular location is the chloroplast. Its function is as follows. Starch-associated phosphoglucan phosphatase that selectively dephosphorylates the glucan C3 position. Probably participates in the regulation of starch degradation. The polypeptide is Phosphoglucan phosphatase LSF2, chloroplastic (LSF2) (Arabidopsis thaliana (Mouse-ear cress)).